A 423-amino-acid chain; its full sequence is Imidazolonepropionase (423 aa).

His-78 and His-80 together coordinate Fe(3+). 2 residues coordinate Zn(2+): His-78 and His-80. Positions 87, 150, and 183 each coordinate 4-imidazolone-5-propanoate. Residue Tyr-150 coordinates N-formimidoyl-L-glutamate. Position 247 (His-247) interacts with Fe(3+). His-247 contributes to the Zn(2+) binding site. Glu-250 contacts 4-imidazolone-5-propanoate. Residue Asp-322 participates in Fe(3+) binding. Asp-322 is a Zn(2+) binding site. N-formimidoyl-L-glutamate contacts are provided by Asn-324 and Gly-326. Residue Ser-327 coordinates 4-imidazolone-5-propanoate.

The protein belongs to the metallo-dependent hydrolases superfamily. HutI family. Requires Zn(2+) as cofactor. The cofactor is Fe(3+).

It localises to the cytoplasm. It carries out the reaction 4-imidazolone-5-propanoate + H2O = N-formimidoyl-L-glutamate. It participates in amino-acid degradation; L-histidine degradation into L-glutamate; N-formimidoyl-L-glutamate from L-histidine: step 3/3. Functionally, catalyzes the hydrolytic cleavage of the carbon-nitrogen bond in imidazolone-5-propanoate to yield N-formimidoyl-L-glutamate. It is the third step in the universal histidine degradation pathway. The protein is Imidazolonepropionase of Bacillus anthracis (strain A0248).